Reading from the N-terminus, the 293-residue chain is CDP-abequose synthase (293 aa).

Residue Thr-113 coordinates substrate. The active-site Proton acceptor is the Tyr-130.

Belongs to the NAD(P)-dependent epimerase/dehydratase family.

It carries out the reaction CDP-alpha-D-abequose + NADP(+) = CDP-4-dehydro-3,6-dideoxy-alpha-D-glucose + NADPH + H(+). The protein operates within bacterial outer membrane biogenesis; LPS O-antigen biosynthesis. The polypeptide is CDP-abequose synthase (Salmonella muenchen).